The following is an 845-amino-acid chain: Alanine--tRNA ligase (845 aa).

The Zn(2+) site is built by His552, His556, Cys653, and His657.

It belongs to the class-II aminoacyl-tRNA synthetase family. The cofactor is Zn(2+).

The protein resides in the cytoplasm. The enzyme catalyses tRNA(Ala) + L-alanine + ATP = L-alanyl-tRNA(Ala) + AMP + diphosphate. Functionally, catalyzes the attachment of alanine to tRNA(Ala) in a two-step reaction: alanine is first activated by ATP to form Ala-AMP and then transferred to the acceptor end of tRNA(Ala). Also edits incorrectly charged Ser-tRNA(Ala) and Gly-tRNA(Ala) via its editing domain. In Campylobacter hominis (strain ATCC BAA-381 / DSM 21671 / CCUG 45161 / LMG 19568 / NCTC 13146 / CH001A), this protein is Alanine--tRNA ligase.